Here is a 591-residue protein sequence, read N- to C-terminus: Melatonin-related receptor (591 aa).

Residues 1–38 (MATVPKSNMGPTKAVPTPFGCIGCKLPKPDYPPALIIF) are Extracellular-facing. Residues 39 to 59 (MFCAMVITVVVDLIGNSMVIL) form a helical membrane-spanning segment. Residues 60-72 (AVTKNKKLRNSGN) are Cytoplasmic-facing. The chain crosses the membrane as a helical span at residues 73 to 93 (IFVASLSVADMLVAIYPYPLM). Topologically, residues 94–111 (LYAMSVGGWDLSQLQCQM) are extracellular. An intrachain disulfide couples Cys-109 to Cys-186. A helical membrane pass occupies residues 112–132 (VGLVTGLSVVGSIFNITAIAI). Residues 133 to 151 (NRYCYICHSLQYKRIFSLR) are Cytoplasmic-facing. A helical transmembrane segment spans residues 152 to 172 (NTCIYLVVTWVMTVLAVLPNM). Topologically, residues 173–196 (YIGTIEYDPRTYTCIFNYVNNPAF) are extracellular. The helical transmembrane segment at 197–217 (TVTIVCIHFVLPLIIVGYCYT) threads the bilayer. Topologically, residues 218–247 (KIWIKVLAARDPAGQNPDNQFAEVRNFLTM) are cytoplasmic. A helical membrane pass occupies residues 248-268 (FVIFLLFAVCWCPVNVLTVLV). The Extracellular portion of the chain corresponds to 269-281 (AVIPKEMAGKIPN). A helical membrane pass occupies residues 282–302 (WLYLAAYCIAYFNSCLNAIIY). Residues 303 to 591 (GILNESFRRE…DSDCSDEMAV (289 aa)) lie on the Cytoplasmic side of the membrane. The disordered stretch occupies residues 378 to 427 (LPGDASAPHSDRASVRPKPQTRSTSVYRKPASIHHKSISGHPKSASVYPK).

It belongs to the G-protein coupled receptor 1 family. As to quaternary structure, homodimer, and heterodimer with MTNR1A and MTNR1B. Interacts with KAT5. Interacts with RTN4 isoform A/NOGO-A. Interacts with TGFBR1. Strongly expressed in the brain with highly restricted pattern of expression, confined to a subset of the ependymal cells of the third ventricle and a population of cells in the dorsomedial hypothalamic nucleus.

It is found in the cell membrane. Its subcellular location is the postsynaptic density. Its function is as follows. G protein-coupled receptor that plays a role in numerous physiological processes including regulation of energy metabolism, neurite outgrowth or cell migration. Promotes self-renewal and neuronal differentiation of neural progenitor cells through activation of the NOTCH and WNT/beta-catenin signaling pathways. Modulates the KAT5-dependent glucocorticoid receptor signaling by modulating KAT5 subcellular compartmentalisation. Also plays a role in the activation TGFBR1 in the absence of TGFBR2 by interfering with FKBP1A binding to TGFBR1, leading to induction of both canonical and non-canonical SMAD signaling pathways resulting in inhibition of proliferation or promotion of migration. This is Melatonin-related receptor (Gpr50) from Mus musculus (Mouse).